Reading from the N-terminus, the 219-residue chain is MAEWIAGGLEGPAGRGLDERVVRSGTTTVGLIASDHVILAADKRATAGFLIASRRVKKIVMLSNYVAMTVSGLVADAQILSDVLREEIRLYEMTNKVKPSVRFVASLLSNILFSSKFFPYIVQLIVGGYDTQPRLYTLDLFGSITEDKYTATGSGSPIAYGVLEERYREDLSVEEAIKVATTAIRSAVLRDAASGDGADVVVIGPQGYEEKFIPYNSLV.

Positions 1-25 (MAEWIAGGLEGPAGRGLDERVVRSG) are cleaved as a propeptide — removed in mature form; by autocatalysis. The Nucleophile role is filled by Thr26.

It belongs to the peptidase T1B family. In terms of assembly, the 20S proteasome core is composed of 14 alpha and 14 beta subunits that assemble into four stacked heptameric rings, resulting in a barrel-shaped structure. The two inner rings, each composed of seven catalytic beta subunits, are sandwiched by two outer rings, each composed of seven alpha subunits. The catalytic chamber with the active sites is on the inside of the barrel. Has a gated structure, the ends of the cylinder being occluded by the N-termini of the alpha-subunits. Is capped at one or both ends by the proteasome regulatory ATPase, PAN.

Its subcellular location is the cytoplasm. It catalyses the reaction Cleavage of peptide bonds with very broad specificity.. The formation of the proteasomal ATPase PAN-20S proteasome complex, via the docking of the C-termini of PAN into the intersubunit pockets in the alpha-rings, triggers opening of the gate for substrate entry. Interconversion between the open-gate and close-gate conformations leads to a dynamic regulation of the 20S proteasome proteolysis activity. Component of the proteasome core, a large protease complex with broad specificity involved in protein degradation. In Aeropyrum pernix (strain ATCC 700893 / DSM 11879 / JCM 9820 / NBRC 100138 / K1), this protein is Proteasome subunit beta 2.